The primary structure comprises 141 residues: Nucleoside triphosphatase NudI (141 aa).

Positions 1–141 constitute a Nudix hydrolase domain; it reads MRQRTIVCPL…RHTLALKGLL (141 aa). A Nudix box motif is present at residues 38–59; sequence GGVEPGERIEEALRREIREELG.

This sequence belongs to the Nudix hydrolase family. NudI subfamily. Monomer. Requires Mg(2+) as cofactor.

The enzyme catalyses a ribonucleoside 5'-triphosphate + H2O = a ribonucleoside 5'-phosphate + diphosphate + H(+). It catalyses the reaction a 2'-deoxyribonucleoside 5'-triphosphate + H2O = a 2'-deoxyribonucleoside 5'-phosphate + diphosphate + H(+). It carries out the reaction dUTP + H2O = dUMP + diphosphate + H(+). The catalysed reaction is dTTP + H2O = dTMP + diphosphate + H(+). The enzyme catalyses dCTP + H2O = dCMP + diphosphate + H(+). Catalyzes the hydrolysis of nucleoside triphosphates, with a preference for pyrimidine deoxynucleoside triphosphates (dUTP, dTTP and dCTP). The sequence is that of Nucleoside triphosphatase NudI from Salmonella heidelberg (strain SL476).